The sequence spans 158 residues: NAD(P)H-quinone oxidoreductase subunit J, chloroplastic (158 aa).

The protein belongs to the complex I 30 kDa subunit family. In terms of assembly, NDH is composed of at least 16 different subunits, 5 of which are encoded in the nucleus.

It is found in the plastid. It localises to the chloroplast thylakoid membrane. It catalyses the reaction a plastoquinone + NADH + (n+1) H(+)(in) = a plastoquinol + NAD(+) + n H(+)(out). The catalysed reaction is a plastoquinone + NADPH + (n+1) H(+)(in) = a plastoquinol + NADP(+) + n H(+)(out). Functionally, NDH shuttles electrons from NAD(P)H:plastoquinone, via FMN and iron-sulfur (Fe-S) centers, to quinones in the photosynthetic chain and possibly in a chloroplast respiratory chain. The immediate electron acceptor for the enzyme in this species is believed to be plastoquinone. Couples the redox reaction to proton translocation, and thus conserves the redox energy in a proton gradient. The polypeptide is NAD(P)H-quinone oxidoreductase subunit J, chloroplastic (Ceratophyllum demersum (Rigid hornwort)).